Here is a 378-residue protein sequence, read N- to C-terminus: Protein RecA (378 aa).

79-86 (GPESSGKT) serves as a coordination point for ATP.

It belongs to the RecA family.

It localises to the cytoplasm. Its function is as follows. Can catalyze the hydrolysis of ATP in the presence of single-stranded DNA, the ATP-dependent uptake of single-stranded DNA by duplex DNA, and the ATP-dependent hybridization of homologous single-stranded DNAs. It interacts with LexA causing its activation and leading to its autocatalytic cleavage. This is Protein RecA from Streptococcus pyogenes serotype M12 (strain MGAS2096).